Consider the following 110-residue polypeptide: Large ribosomal subunit protein uL22 (110 aa).

This sequence belongs to the universal ribosomal protein uL22 family. Part of the 50S ribosomal subunit.

Its function is as follows. This protein binds specifically to 23S rRNA; its binding is stimulated by other ribosomal proteins, e.g. L4, L17, and L20. It is important during the early stages of 50S assembly. It makes multiple contacts with different domains of the 23S rRNA in the assembled 50S subunit and ribosome. In terms of biological role, the globular domain of the protein is located near the polypeptide exit tunnel on the outside of the subunit, while an extended beta-hairpin is found that lines the wall of the exit tunnel in the center of the 70S ribosome. The polypeptide is Large ribosomal subunit protein uL22 (Nitrosomonas europaea (strain ATCC 19718 / CIP 103999 / KCTC 2705 / NBRC 14298)).